Consider the following 393-residue polypeptide: CCCH-type zinc finger protein oma-2 (393 aa).

The interval 1–26 (MDMLKENVIQNNEARTESSVEPSHPD) is disordered. Residues 14–26 (ARTESSVEPSHPD) are compositionally biased toward basic and acidic residues. 2 C3H1-type zinc fingers span residues 105–133 (SYKTVICQAWLESKTCAFAENCRFAHGEE) and 147–175 (KYRTKLCDKYTTTGLCPYGKRCLFIHPDN). Disordered stretches follow at residues 227 to 251 (TPDEPAANMPLGPTPVSIRGPRYEL) and 311 to 340 (KQSTPGGVSGYSSSGSTPSQDSDSSPLTAA). Positions 313–340 (STPGGVSGYSSSGSTPSQDSDSSPLTAA) are enriched in low complexity. At threonine 327 the chain carries Phosphothreonine; by GSK3.

Exclusively expressed in the hermaphrodite gonad. Expression only in cellulized oocytes. Widely distributed throughout gonadal oocytes from the mitotic stage to the developing diakinesis stage.

The protein resides in the cytoplasm. Its subcellular location is the cytoplasmic granule. It localises to the cytoskeleton. The protein localises to the microtubule organizing center. It is found in the centrosome. Zinc-finger RNA-binding protein that binds to 5'-UA[AU]-3' motifs in the 3'-UTR of maternal mRNAs to suppress translation in oocytes and embryos. Acts redundantly with oma-1 to control the temporal expression and distribution of maternal proteins and thereby promote meiotic progression, oocyte maturation, fertilization and embryonic development. Also, together with oma-1, is involved in P-granule distribution during embryonic development. This Caenorhabditis elegans protein is CCCH-type zinc finger protein oma-2.